Here is a 167-residue protein sequence, read N- to C-terminus: Large ribosomal subunit protein uL10 (167 aa).

It belongs to the universal ribosomal protein uL10 family. Part of the ribosomal stalk of the 50S ribosomal subunit. The N-terminus interacts with L11 and the large rRNA to form the base of the stalk. The C-terminus forms an elongated spine to which L12 dimers bind in a sequential fashion forming a multimeric L10(L12)X complex.

Functionally, forms part of the ribosomal stalk, playing a central role in the interaction of the ribosome with GTP-bound translation factors. The polypeptide is Large ribosomal subunit protein uL10 (Ligilactobacillus salivarius (strain UCC118) (Lactobacillus salivarius)).